Reading from the N-terminus, the 116-residue chain is Secreted RxLR effector protein 9 (116 aa).

The N-terminal stretch at 1–17 (MRLIYIFMVSIVTTLHA) is a signal peptide. The RxLR-dEER signature appears at 49–64 (RILRGTDGNVNREQER).

The protein belongs to the RxLR effector family.

The protein localises to the secreted. Its subcellular location is the host cytoplasm. It localises to the host nucleus. Effector that acts as a broad suppressor of cell death to interrupt plant immunity. Inhibits cell death induced by cell death-inducing proteins, including the PAMP elicitor INF1 from P.infestans. In Plasmopara viticola (Downy mildew of grapevine), this protein is Secreted RxLR effector protein 9.